A 75-amino-acid chain; its full sequence is Probable [Fe-S]-dependent transcriptional repressor (75 aa).

Iron-sulfur cluster contacts are provided by C55, C60, C63, and C72.

Belongs to the FeoC family.

May function as a transcriptional regulator that controls feoABC expression. The chain is Probable [Fe-S]-dependent transcriptional repressor from Serratia marcescens.